The chain runs to 714 residues: Lipase maturation factor 2 (714 aa).

The next 9 helical transmembrane spans lie at 11–31 (LFLAGLAAAYLAAFVSLYLQI), 79–99 (MELLCLLGAVASMGALLCAPL), 103–125 (LLFAVLRVFYLSLYQVGQVFLYF), 159–179 (SVTFWLVRWLLFRLMFASGVV), 221–241 (FSVVATYVIEIAVPLLFFMPI), 257–277 (ILIILTGNYNFFNALTIVLAF), 304–324 (TLLSFLSTLLELATYALLLYW), 358–378 (VTLPLVGLGFLSLSWEILSAL), and 398–418 (AVFATATVGMFAISLVPFTYI). A glycan (N-linked (GlcNAc...) asparagine) is linked at asparagine 483. The helical transmembrane segment at 629 to 649 (PFSPHVVLWSLYVVAATTCLL) threads the bilayer. Positions 654–669 (RRPRGGAPPTRHKAPK) are enriched in basic residues. Residues 654–714 (RRPRGGAPPT…EGPRGTKRRK (61 aa)) form a disordered region. Basic and acidic residues predominate over residues 683–708 (RRKEGREAEERGEGRSRGAADGEGPR).

It belongs to the lipase maturation factor family.

The protein localises to the endoplasmic reticulum membrane. Functionally, involved in the maturation of specific proteins in the endoplasmic reticulum. May be required for maturation and transport of active lipoprotein lipase (LPL) through the secretory pathway. In Gallus gallus (Chicken), this protein is Lipase maturation factor 2 (LMF2).